Here is a 477-residue protein sequence, read N- to C-terminus: MSPQTETKASVGFKAGVKEYKLTYYTPEYQTKDTDILAAFRVTPQPGVPPEEAGAAVAAESSTGTWTTVWTDGLTSLDRYKGRCYRIERVVGEKDQYIAYVAYPLDLFEEGSVTNMFTSIVGNVFGFKALRALRLEDLRIPPAYVKTFQGPPHGIQVERDKLNKYGRPLLGCTIKPKLGLSAKNYGRAVYECLRGGLDFTKDDENVNSQPFMRWRDRFLFCAEALYKAQAETGEIKGHYLNATAGTCEEMIKRAVFARELGVPIVMHDYLTGGFTANTSLAHYCRDNGLLLHIHRAMHAVIDRQKNHGIHFRVLAKALRMSGGDHIHSGTVVGKLEGERDITLGFVDLLRDDFVEQDRSRGIYFTQDWVSLPGVLPVASGGIHVWHMPALTEIFGDDSVLQFGGGTLGHPWGNAPGAVANRVALEACVQARNEGRDLAQEGNEIIREACKWSPELAAACEVWKEIVFNFAAVDVLDK.

A propeptide spanning residues 1 to 2 is cleaved from the precursor; that stretch reads MS. Pro3 carries the N-acetylproline modification. The residue at position 14 (Lys14) is an N6,N6,N6-trimethyllysine. The substrate site is built by Asn123 and Thr173. The active-site Proton acceptor is Lys175. Lys177 contacts substrate. Mg(2+) contacts are provided by Lys201, Asp203, and Glu204. Position 201 is an N6-carboxylysine (Lys201). His294 (proton acceptor) is an active-site residue. Substrate is bound by residues Arg295, His327, and Ser379.

This sequence belongs to the RuBisCO large chain family. Type I subfamily. As to quaternary structure, heterohexadecamer of 8 large chains and 8 small chains; disulfide-linked. The disulfide link is formed within the large subunit homodimers. Requires Mg(2+) as cofactor. Post-translationally, the disulfide bond which can form in the large chain dimeric partners within the hexadecamer appears to be associated with oxidative stress and protein turnover.

Its subcellular location is the plastid. The protein resides in the chloroplast. It carries out the reaction 2 (2R)-3-phosphoglycerate + 2 H(+) = D-ribulose 1,5-bisphosphate + CO2 + H2O. It catalyses the reaction D-ribulose 1,5-bisphosphate + O2 = 2-phosphoglycolate + (2R)-3-phosphoglycerate + 2 H(+). RuBisCO catalyzes two reactions: the carboxylation of D-ribulose 1,5-bisphosphate, the primary event in carbon dioxide fixation, as well as the oxidative fragmentation of the pentose substrate in the photorespiration process. Both reactions occur simultaneously and in competition at the same active site. In Nicotiana tomentosiformis (Tobacco), this protein is Ribulose bisphosphate carboxylase large chain.